The following is a 613-amino-acid chain: Portal protein (613 aa).

Residues 577 to 613 (ATGGDHGIRQAPSARGDAEPDHAKSKPARDPPPGAGS) are disordered. The span at 592–605 (GDAEPDHAKSKPAR) shows a compositional bias: basic and acidic residues.

The protein belongs to the herpesviridae portal protein family. In terms of assembly, homododecamerizes. Interacts with terminase subunits TRM1 and TRM3.

The protein resides in the virion. Its subcellular location is the host nucleus. Forms a portal in the viral capsid through which viral DNA is translocated during DNA packaging. Assembles as a dodecamer at a single fivefold axe of the T=16 icosahedric capsid. Binds to the molecular motor that translocates the viral DNA, termed terminase. This chain is Portal protein, found in Homo sapiens (Human).